A 129-amino-acid polypeptide reads, in one-letter code: Small ribosomal subunit protein uS11 (129 aa).

Belongs to the universal ribosomal protein uS11 family. Part of the 30S ribosomal subunit. Interacts with proteins S7 and S18. Binds to IF-3.

Functionally, located on the platform of the 30S subunit, it bridges several disparate RNA helices of the 16S rRNA. Forms part of the Shine-Dalgarno cleft in the 70S ribosome. This Haemophilus influenzae (strain ATCC 51907 / DSM 11121 / KW20 / Rd) protein is Small ribosomal subunit protein uS11.